The chain runs to 420 residues: Protein-lysine 6-oxidase (420 aa).

An N-terminal signal peptide occupies residues 1–27; it reads MRCAPPGLLLAQLHACIFWSGLWPAGC. The propeptide at 28-171 is removed by BMP1; sequence QSPPAAWRQR…RPGREDVMVG (144 aa). The segment at 54–177 is disordered; it reads AQYQPPRRRQ…VMVGDDPYSP (124 aa). A glycan (N-linked (GlcNAc...) asparagine) is linked at Asn-78. The segment covering 82–92 has biased composition (low complexity); that stretch reads PRAAAAAAARP. The span at 93–105 shows a compositional bias: pro residues; that stretch reads QPEPQPQAQPQPR. Basic residues-rich tracts occupy residues 107–119 and 134–147; these read RSSRRQPLGRRHW and APRRRPRGRRSRRR. At Tyr-190 the chain carries Sulfotyrosine. Positions 216 to 420 are lysyl-oxidase like; it reads PDLVPDPYYI…YASGCTISPY (205 aa). 5 disulfides stabilise this stretch: Cys-241–Cys-247, Cys-294–Cys-343, Cys-327–Cys-333, Cys-354–Cys-364, and Cys-401–Cys-415. Residues His-295, His-297, and His-299 each coordinate Cu cation. A cross-link (lysine tyrosylquinone (Lys-Tyr)) is located at residues 323–358; that stretch reads KASFCLEDTSCDYGYYRRYACTAHTQGLSPGCYDTY. Tyr-358 is subject to 2',4',5'-topaquinone.

This sequence belongs to the lysyl oxidase family. Requires Cu cation as cofactor. Lysine tyrosylquinone residue serves as cofactor. In terms of processing, the lysine tyrosylquinone cross-link (LTQ) is generated by condensation of the epsilon-amino group of a lysine with a topaquinone produced by oxidation of tyrosine. Post-translationally, proteolytically cleaved by BMP1 which removes the propeptide. Also proteolytically cleaved by ADAMTS2 and ADAMTS14, but not by ADAMTS3, at an additional cleavage site downstream of the BMP1 cleavage site. The propeptide plays a role in directing the deposition of this enzyme to elastic fibers, via interaction with tropoelastin. Cleavage by BMP1 to remove the propeptide does not increase enzymatic activity but increases binding to collagen. Cleavage by ADAMTS2 produces a form with reduced collagen-binding activity. Sulfated at Tyr-190 and also at either Tyr-186 or Tyr-187 which enhances binding to collagen.

The protein resides in the secreted. It is found in the extracellular space. The catalysed reaction is L-lysyl-[protein] + O2 + H2O = (S)-2-amino-6-oxohexanoyl-[protein] + H2O2 + NH4(+). Functionally, responsible for the post-translational oxidative deamination of peptidyl lysine residues in precursors to fibrous collagen and elastin. In addition to cross linking of extracellular matrix proteins, it may have a direct role in tumor suppression. This Gallus gallus (Chicken) protein is Protein-lysine 6-oxidase (LOX).